The chain runs to 652 residues: MSNESLANLLKEERRFAPPADLAANANVTAEAYEQAKADRLGFWAEQARRLTWATEPTETLDWSNPPFAKWFKDGKLNVAYNCVDRHVEAGHGDRVAIHFEGEPGDSRAITYAELKDEVSKAANALTELGVQKGDRVAVYLPMIPEAVVAMLACARIGAAHSVVFGGFSADAIAARIKDADAKLVITADGGYRRGKPSALKPAVDDAVSRGDGVEKVLVVRRTGQEVAWTEGRDVWWHEITAKQSAEHTPEAFDAEHPLFILYTSGTTGKPKGILHTSGGYLTQTSYTHHAVFDLKPETDVYWCTADIGWVTGHSYITYGPLSNGATQVMYEGTPDTPHQGRFWEIVQKYGVTILYTAPTAIRTFMKWGDDIPAKFDLSSLRVLGSVGEPINPEAWIWYRKHIGGDRTPIVDTWWQTETGAMMISPLPGVTETKPGSAQRPLPGISATVVDDEAREVPNGGGGYLVLTEPWPSMLRTIWGDDQRFLDTYWSRFEGKYFAGDGAKKDEDGDIWLLGRVDDVMLVSGHNISTTEVESALVSHPSVAEAAVVGAADETTGQAIVAFVILRGTANAEDDNLVADLRNHVGTTLGPIAKPKRILPVAELPKTRSGKIMRRLLRDVAENRALGDVTTLTDSSVMDLIQSKLPAAPSED.

CoA contacts are provided by residues 193–196 (RRGK) and T312. ATP contacts are provided by residues 388-390 (GEP), 412-417 (DTWWQT), D501, and R516. S524 serves as a coordination point for CoA. Mg(2+)-binding residues include V538, H540, and V543. Residue K611 is modified to N6-acetyllysine.

Belongs to the ATP-dependent AMP-binding enzyme family. Mg(2+) is required as a cofactor. Acetylated. Deacetylation by the SIR2-homolog deacetylase activates the enzyme.

It catalyses the reaction acetate + ATP + CoA = acetyl-CoA + AMP + diphosphate. Catalyzes the conversion of acetate into acetyl-CoA (AcCoA), an essential intermediate at the junction of anabolic and catabolic pathways. AcsA undergoes a two-step reaction. In the first half reaction, AcsA combines acetate with ATP to form acetyl-adenylate (AcAMP) intermediate. In the second half reaction, it can then transfer the acetyl group from AcAMP to the sulfhydryl group of CoA, forming the product AcCoA. The protein is Acetyl-coenzyme A synthetase of Streptomyces avermitilis (strain ATCC 31267 / DSM 46492 / JCM 5070 / NBRC 14893 / NCIMB 12804 / NRRL 8165 / MA-4680).